Here is a 124-residue protein sequence, read N- to C-terminus: Darcynin homolog (124 aa).

It belongs to the darcynin family.

The sequence is that of Darcynin homolog from Granulibacter bethesdensis (strain ATCC BAA-1260 / CGDNIH1).